The chain runs to 335 residues: Probable deoxyhypusine synthase (335 aa).

Lysine 307 (nucleophile) is an active-site residue.

The protein belongs to the deoxyhypusine synthase family. Requires NAD(+) as cofactor.

The enzyme catalyses [eIF5A protein]-L-lysine + spermidine = [eIF5A protein]-deoxyhypusine + propane-1,3-diamine. It participates in protein modification; eIF5A hypusination. Catalyzes the NAD-dependent oxidative cleavage of spermidine and the subsequent transfer of the butylamine moiety of spermidine to the epsilon-amino group of a specific lysine residue of the eIF-5A precursor protein to form the intermediate deoxyhypusine residue. The protein is Probable deoxyhypusine synthase (dys) of Pyrococcus abyssi (strain GE5 / Orsay).